The following is a 925-amino-acid chain: Protein PDC2 (925 aa).

The 76-residue stretch at 63-138 folds into the HTH CENPB-type domain; the sequence is DANRLRKPNN…LSKMDVNISV (76 aa). Disordered stretches follow at residues 510–596, 674–693, and 904–925; these read DNNQ…RNSS, NEKA…SSTA, and PTGG…TGFF. The span at 513–537 shows a compositional bias: polar residues; that stretch reads QNHLSMSQASHNPDYNSNHSNNAIE. Over residues 538–563 the composition is skewed to low complexity; it reads NTNNRGSNNNNNNNGSSNNINDNDSS. Over residues 565 to 596 the composition is skewed to polar residues; sequence KYLQQNTVDNSTKTGNPGQPNISSMESQRNSS. Residues 674–686 are compositionally biased toward basic and acidic residues; that stretch reads NEKAASDQNKSTD. Polar residues predominate over residues 904–916; that stretch reads PTGGSNLPDSNNL.

Its function is as follows. Essential for the synthesis of pyruvate decarboxylase. May be important for a high basal level of PDC gene expression or play a positive role in the autoregulation control of PDC1 and PDC5. In Saccharomyces cerevisiae (strain ATCC 204508 / S288c) (Baker's yeast), this protein is Protein PDC2 (PDC2).